The sequence spans 774 residues: Protein translocase subunit SecA 2 (774 aa).

ATP is bound by residues glutamine 94, 112 to 116 (GEGKT), and aspartate 501.

This sequence belongs to the SecA family. Monomer and homodimer. Part of the essential Sec protein translocation apparatus which comprises SecA, SecYEG and auxiliary proteins SecDF. Other proteins may also be involved.

The protein resides in the cell membrane. The protein localises to the cytoplasm. The enzyme catalyses ATP + H2O + cellular proteinSide 1 = ADP + phosphate + cellular proteinSide 2.. Its function is as follows. Part of the Sec protein translocase complex. Interacts with the SecYEG preprotein conducting channel. Has a central role in coupling the hydrolysis of ATP to the transfer of proteins into and across the cell membrane, serving as an ATP-driven molecular motor driving the stepwise translocation of polypeptide chains across the membrane. The polypeptide is Protein translocase subunit SecA 2 (Mycobacterium sp. (strain JLS)).